Reading from the N-terminus, the 1536-residue chain is Glycogen debranching enzyme (1536 aa).

Active-site residues include Asp535, His538, and Asp670.

Belongs to the glycogen debranching enzyme family. In terms of assembly, interacts with IGD1.

The protein resides in the mitochondrion. It localises to the cytoplasm. It carries out the reaction Transfers a segment of a (1-&gt;4)-alpha-D-glucan to a new position in an acceptor, which may be glucose or a (1-&gt;4)-alpha-D-glucan.. The enzyme catalyses Hydrolysis of (1-&gt;6)-alpha-D-glucosidic branch linkages in glycogen phosphorylase limit dextrin.. Activity is inhibited by IGD1. Its function is as follows. Multifunctional enzyme acting as 1,4-alpha-D-glucan:1,4-alpha-D-glucan 4-alpha-D-glycosyltransferase and amylo-1,6-glucosidase in glycogen degradation. This Saccharomyces cerevisiae (strain ATCC 204508 / S288c) (Baker's yeast) protein is Glycogen debranching enzyme (GDB1).